A 1449-amino-acid chain; its full sequence is Disease resistance protein RPP5 (1449 aa).

In terms of domain architecture, TIR spans 10-178 (RRYDVFPSFS…KISNDVSNKL (169 aa)). Glu-85 is a catalytic residue. Residues 192–446 (EAHIEAIKSV…IACLFNGFEV (255 aa)) enclose the NB-ARC domain. LRR repeat units follow at residues 549 to 573 (MRNLQYLKIGDWSDGGQPQSLVYLP), 574 to 595 (LKLRLLDWDDCPLKSLPSTFKA), 597 to 618 (YLVNLIMKYSKLEKLWEGTLPL), 619 to 642 (GSLKKMNLLCSKNLKEIPDLSNAR), 644 to 665 (LEELDLEGCESLVTLPSSIQNA), 687 to 710 (MCNLEYLSVDCSRVEGTQGIVYFP), 712 to 732 (KLRLLLWNNCPLKRLHSNFKV), 733 to 755 (EYLVKLRMENSDLEKLWDGTQPL), 756 to 779 (GRLKQMFLRGSKYLKEIPDLSLAI), 802 to 825 (AIKLIYLDISDCKKLESFPTDLNL), 826 to 849 (ESLEYLNLTGCPNLRNFPAIKMGC), 915 to 939 (LGSLEEMDLSESENLTEIPDLSKAT), 941 to 962 (LKHLYLNNCKSLVTLPSTIGNL), 963 to 985 (QKLVRLEMKECTGLEVLPTDVNL), 986 to 1011 (SSLETLDLSGCSSLRTFPLISKSIKW), 1028 to 1052 (ATKLESLILNNCKSLVTLPSTIGNL), 1053 to 1077 (QNLRRLYMKRCTGLEVLPTDVNLSS), 1096 to 1119 (STNIVWLYLENTAIGEVPCCIEDF), and 1120 to 1143 (TRLRVLLMYCCQRLKNISPNIFRL).

Interacts with RSH1.

It catalyses the reaction NAD(+) + H2O = ADP-D-ribose + nicotinamide + H(+). Functionally, TIR-NB-LRR receptor-like protein that confers resistance to the pathogen Hyaloperonospora arabidopsis isolate Noco2 (downy mildew disease). Confers resistance to H.arabidopsis isolates Emoy2, Emwa1 and Noco2. In Arabidopsis thaliana (Mouse-ear cress), this protein is Disease resistance protein RPP5.